We begin with the raw amino-acid sequence, 452 residues long: Phosphoglucosamine mutase (452 aa).

The active-site Phosphoserine intermediate is Ser101. Residues Ser101, Asp241, Asp243, and Asp245 each contribute to the Mg(2+) site. Ser101 is modified (phosphoserine).

The protein belongs to the phosphohexose mutase family. Mg(2+) is required as a cofactor. Post-translationally, activated by phosphorylation.

The enzyme catalyses alpha-D-glucosamine 1-phosphate = D-glucosamine 6-phosphate. Functionally, catalyzes the conversion of glucosamine-6-phosphate to glucosamine-1-phosphate. In Lactococcus lactis subsp. lactis (strain IL1403) (Streptococcus lactis), this protein is Phosphoglucosamine mutase.